Consider the following 219-residue polypeptide: Nodulation protein NolA (219 aa).

One can recognise an HTH merR-type domain in the interval 10-79; sequence RWRIGELAEA…LHEIRKAMEG (70 aa). A DNA-binding region (H-T-H motif) is located at residues 13 to 32; it reads IGELAEATGVTVRTLHHYEH.

Its function is as follows. Involved in genotype-specific nodulation of soybeans. The polypeptide is Nodulation protein NolA (nolA) (Bradyrhizobium elkanii).